Reading from the N-terminus, the 175-residue chain is RNA pyrophosphohydrolase (175 aa).

The Nudix hydrolase domain maps to 6–149 (GYRPNVGIVI…KRDVYRRVMK (144 aa)). The Nudix box signature appears at 38 to 59 (GGINAGETAEQAMYRELFEEVG).

Belongs to the Nudix hydrolase family. RppH subfamily. A divalent metal cation is required as a cofactor.

Functionally, accelerates the degradation of transcripts by removing pyrophosphate from the 5'-end of triphosphorylated RNA, leading to a more labile monophosphorylated state that can stimulate subsequent ribonuclease cleavage. In Sodalis glossinidius (strain morsitans), this protein is RNA pyrophosphohydrolase.